The chain runs to 1011 residues: Protein translocase subunit SecA, chloroplastic (1011 aa).

Polar residues predominate over residues 1–17 (MATSSLCSSFTSQTCNP). A disordered region spans residues 1 to 22 (MATSSLCSSFTSQTCNPHSRPH). Residues 1–59 (MATSSLCSSFTSQTCNPHSRPHRKTLTLPGSVFLCRQFHLNSPSVSKTRRIRTRQSGPV) constitute a chloroplast transit peptide. Position 164-171 (164-171 (MRTGEGKT)) interacts with ATP. The segment at 976-1011 (QDKMENQKSGKRNARPPTDTNPDPVGTVEPSTSASS) is disordered.

This sequence belongs to the SecA family.

It localises to the plastid. The protein resides in the chloroplast stroma. It is found in the chloroplast thylakoid membrane. It catalyses the reaction ATP + H2O + chloroplast-proteinSide 1 = ADP + phosphate + chloroplast-proteinSide 2.. Its function is as follows. Has a central role in coupling the hydrolysis of ATP to the transfer of proteins across the thylakoid membrane. Facilitates the transport of precursor proteins from the chloroplast stroma to thylakoid lumen. The polypeptide is Protein translocase subunit SecA, chloroplastic (Pisum sativum (Garden pea)).